The primary structure comprises 179 residues: Lebocin-3 (179 aa).

Positions Met-1 to Ala-16 are cleaved as a signal peptide. Positions Gln-17 to Arg-120 are excised as a propeptide. Thr-135 carries an O-linked (GalNAc...) threonine glycan. Residues Arg-153–Glu-179 constitute a propeptide that is removed on maturation.

The protein belongs to the lebocin family. O-glycosylation is important for the antibacterial activity of lebocin. In terms of tissue distribution, hemolymph. Produced in fat body.

It localises to the secreted. Functionally, antibacterial peptide. The protein is Lebocin-3 (LEB3) of Bombyx mori (Silk moth).